A 516-amino-acid polypeptide reads, in one-letter code: Exodeoxyribonuclease 7 large subunit (516 aa).

This sequence belongs to the XseA family. Heterooligomer composed of large and small subunits.

It is found in the cytoplasm. The enzyme catalyses Exonucleolytic cleavage in either 5'- to 3'- or 3'- to 5'-direction to yield nucleoside 5'-phosphates.. In terms of biological role, bidirectionally degrades single-stranded DNA into large acid-insoluble oligonucleotides, which are then degraded further into small acid-soluble oligonucleotides. This is Exodeoxyribonuclease 7 large subunit from Chlamydia trachomatis serovar L2 (strain ATCC VR-902B / DSM 19102 / 434/Bu).